The primary structure comprises 244 residues: DNA repair protein RecO (244 aa).

This sequence belongs to the RecO family.

Its function is as follows. Involved in DNA repair and RecF pathway recombination. The protein is DNA repair protein RecO of Polynucleobacter asymbioticus (strain DSM 18221 / CIP 109841 / QLW-P1DMWA-1) (Polynucleobacter necessarius subsp. asymbioticus).